We begin with the raw amino-acid sequence, 604 residues long: Linalool synthase Tps-5042L13, chloroplastic (604 aa).

The transit peptide at 1 to 34 (MSSMRIYVAIMKKPSVKHVDNVDKKASKPSWRVS) directs the protein to the chloroplast. 5 residues coordinate (2E)-geranyl diphosphate: R323, D360, D364, R501, and D504. Mg(2+) contacts are provided by D360 and D364. Positions 360 to 364 (DDVYD) match the DDXXD motif motif. The Mg(2+) site is built by D504, T508, and E512.

This sequence belongs to the terpene synthase family. Tpsb subfamily. In terms of assembly, monomer. It depends on Mg(2+) as a cofactor. The cofactor is Mn(2+).

The protein resides in the plastid. It is found in the chloroplast. The catalysed reaction is (2E)-geranyl diphosphate + H2O = linalool + diphosphate. The protein operates within secondary metabolite biosynthesis; terpenoid biosynthesis. Monoterpene synthase (mono-TPS) involved in the biosynthesis of monoterpenes natural products. Catalyzes the conversion of (2E)-geranyl diphosphate (GPP) into linalool. The protein is Linalool synthase Tps-5042L13, chloroplastic of Perilla frutescens (Beefsteak mint).